The primary structure comprises 224 residues: Polyadenylate-binding protein 2 (224 aa).

Over residues 1–36 (MADEDITLNEDQLLESLEETNGEQETEIATEVEEEG) the composition is skewed to acidic residues. Positions 1–40 (MADEDITLNEDQLLESLEETNGEQETEIATEVEEEGSMQI) are disordered. Residues 9 to 74 (NEDQLLESLE…QSEVDKQMAG (66 aa)) are a coiled coil. Residues 96-173 (RSVYVGNVDY…RQIKVMSKRT (78 aa)) form the RRM domain.

Interacts with ZC3H3. In terms of tissue distribution, expressed ubiquitously in all transcriptionally active cells.

It is found in the nucleus. Its subcellular location is the cytoplasm. Functionally, involved in the 3'-end formation of mRNA precursors (pre-mRNA) by the addition of a poly(A) tail of 200-250 nt to the upstream cleavage product. Stimulates poly(A) polymerase (PAPOLA) conferring processivity on the poly(A) tail elongation reaction and also controls the poly(A) tail length. Increases the affinity of poly(A) polymerase for RNA. Binds to poly(A) and to poly(G) with high affinity. May protect the poly(A) tail from degradation. Plays a role in the positive regulation of alpha-1,3 fucosylation, possibly by cooperating with swm which regulates nuclear export of fucosyltransferase FucTA. Involved in germline stem cell transit amplification, differentiation and mitosis-to-meiosis transition. This is Polyadenylate-binding protein 2 from Drosophila melanogaster (Fruit fly).